Reading from the N-terminus, the 272-residue chain is Large ribosomal subunit protein uL3 (272 aa).

The segment at glutamine 125–serine 146 is disordered.

It belongs to the universal ribosomal protein uL3 family. In terms of assembly, part of the 50S ribosomal subunit. Forms a cluster with proteins L14 and L19.

One of the primary rRNA binding proteins, it binds directly near the 3'-end of the 23S rRNA, where it nucleates assembly of the 50S subunit. This Metamycoplasma arthritidis (strain 158L3-1) (Mycoplasma arthritidis) protein is Large ribosomal subunit protein uL3.